The primary structure comprises 89 residues: Exodeoxyribonuclease 7 small subunit (89 aa).

The disordered stretch occupies residues 1 to 23 (MRPWRCVSMAKAPAAPSSTQPDP).

It belongs to the XseB family. In terms of assembly, heterooligomer composed of large and small subunits.

The protein localises to the cytoplasm. It catalyses the reaction Exonucleolytic cleavage in either 5'- to 3'- or 3'- to 5'-direction to yield nucleoside 5'-phosphates.. Bidirectionally degrades single-stranded DNA into large acid-insoluble oligonucleotides, which are then degraded further into small acid-soluble oligonucleotides. The polypeptide is Exodeoxyribonuclease 7 small subunit (Acidovorax sp. (strain JS42)).